Reading from the N-terminus, the 258-residue chain is 5'-nucleotidase SurE (258 aa).

The a divalent metal cation site is built by Asp13, Asp14, Ser44, and Asn92. Residues 237 to 258 (SPLTAPHSTEHHDALDGIATEF) form a disordered region.

This sequence belongs to the SurE nucleotidase family. The cofactor is a divalent metal cation.

Its subcellular location is the cytoplasm. The catalysed reaction is a ribonucleoside 5'-phosphate + H2O = a ribonucleoside + phosphate. In terms of biological role, nucleotidase that shows phosphatase activity on nucleoside 5'-monophosphates. The chain is 5'-nucleotidase SurE from Halobacterium salinarum (strain ATCC 29341 / DSM 671 / R1).